We begin with the raw amino-acid sequence, 407 residues long: Bifunctional enzyme IspD/IspF (407 aa).

Positions 1-246 (MTEASENASA…SSERTHFPDI (246 aa)) are 2-C-methyl-D-erythritol 4-phosphate cytidylyltransferase. The interval 247-407 (RTGNGYDVHA…SVVFPGEVPE (161 aa)) is 2-C-methyl-D-erythritol 2,4-cyclodiphosphate synthase. A divalent metal cation contacts are provided by aspartate 253 and histidine 255. 4-CDP-2-C-methyl-D-erythritol 2-phosphate is bound by residues 253-255 (DVH) and 279-280 (HS). Histidine 287 is an a divalent metal cation binding site. 4-CDP-2-C-methyl-D-erythritol 2-phosphate is bound by residues 301 to 303 (DIG), 377 to 380 (TTNE), phenylalanine 384, and arginine 387.

This sequence in the N-terminal section; belongs to the IspD/TarI cytidylyltransferase family. IspD subfamily. In the C-terminal section; belongs to the IspF family. It depends on a divalent metal cation as a cofactor.

It catalyses the reaction 2-C-methyl-D-erythritol 4-phosphate + CTP + H(+) = 4-CDP-2-C-methyl-D-erythritol + diphosphate. The enzyme catalyses 4-CDP-2-C-methyl-D-erythritol 2-phosphate = 2-C-methyl-D-erythritol 2,4-cyclic diphosphate + CMP. The protein operates within isoprenoid biosynthesis; isopentenyl diphosphate biosynthesis via DXP pathway; isopentenyl diphosphate from 1-deoxy-D-xylulose 5-phosphate: step 2/6. It functions in the pathway isoprenoid biosynthesis; isopentenyl diphosphate biosynthesis via DXP pathway; isopentenyl diphosphate from 1-deoxy-D-xylulose 5-phosphate: step 4/6. Functionally, bifunctional enzyme that catalyzes the formation of 4-diphosphocytidyl-2-C-methyl-D-erythritol from CTP and 2-C-methyl-D-erythritol 4-phosphate (MEP) (IspD), and catalyzes the conversion of 4-diphosphocytidyl-2-C-methyl-D-erythritol 2-phosphate (CDP-ME2P) to 2-C-methyl-D-erythritol 2,4-cyclodiphosphate (ME-CPP) with a corresponding release of cytidine 5-monophosphate (CMP) (IspF). The chain is Bifunctional enzyme IspD/IspF from Mesorhizobium japonicum (strain LMG 29417 / CECT 9101 / MAFF 303099) (Mesorhizobium loti (strain MAFF 303099)).